The primary structure comprises 246 residues: Allergin-1 (246 aa).

Positions 1 to 33 (MGDGDSPMCLSAVSFKGIRCWLDKLLLWALTIS) are cleaved as a signal peptide. The Extracellular portion of the chain corresponds to 34–150 (ITLQNAAVDC…DESCPSCRLS (117 aa)). The Ig-like C2-type domain maps to 52–131 (PSPNLNSSMN…VNVSNLMKYS (80 aa)). Asn68 is a glycosylation site (N-linked (GlcNAc...) asparagine). Cysteines 73 and 120 form a disulfide. A helical transmembrane segment spans residues 151–171 (LLLPGLLLGILVIVLVLAYLI). At 172 to 246 (HLKYKKGKKT…ADYIYSELTH (75 aa)) the chain is on the cytoplasmic side. 2 short sequence motifs (ITIM motif) span residues 214–219 (IHYATP) and 239–244 (YIYSEL). 2 positions are modified to phosphotyrosine: Tyr216 and Tyr241.

In terms of assembly, monomer. Interacts (tyrosine-phosphorylated) with PTPN6, PTPN11 and INPP5D. N-glycosylated. In terms of tissue distribution, expressed in myeloid cells (dendritic cells, macrophages and neutrophils but not in T-cells, B-cells or natural killer cells) and mast cells (at protein level).

It localises to the cell membrane. It is found in the secreted. Functionally, immunoglobulin-like receptor which plays an inhibitory role in degranulation of mast cells. Negatively regulates IgE-mediated mast cell activation and suppresses the type I immediate hypersensitivity reaction. The chain is Allergin-1 (Milr1) from Mus musculus (Mouse).